Consider the following 1020-residue polypeptide: C protein alpha-antigen (1020 aa).

An N-terminal signal peptide occupies residues 1–41 (MFRRSKNNSYDTSQTKQRFSIKKFKFGAASVLIGLSFLGGV). The tract at residues 227–964 (VPDKDKYDPT…EVTVHVTPKP (738 aa)) is 9 X 82 AA tandem repeats. 16 disordered regions span residues 261–281 (DGSKGVPTVVGDRPDTNVPGD), 306–330 (PKPVPDKDKYDPTGGETTVPQGTPV), 342–363 (PDGSKGVPTVVGDRPDTNVPGD), 388–445 (PKPV…VPGD), 470–494 (PKPVPDKDKYDPTGGETTVPQGTPV), 506–527 (PDGSKGVPTVVGDRPDTNVPGD), 552–576 (PKPVPDKDKYDPTGGETTVPQGTPV), 588–610 (PDGSKGVPTVVGDRPDTNVPGDH), 634–658 (PKPVPDKDKYDPTGGETTVPQGTPV), 670–692 (PDGSKGVPTVVGDRPDTNVPGDH), 716–740 (PKPVPDKDKYDPTGGETTVPQGTPV), 752–774 (PDGSKGVPTVVGDRPDTNVPGDH), 798–822 (PKPVPDKDKYDPTGGETTVPQGTPV), 834–856 (PDGSKGVPTVVGDRPDTNVPGDH), 880–904 (PKPVPDKDKYDPTGGETTVPQGTPV), and 962–989 (PKPVPDKDKYDPTGKAQQVNGKGNKLPA). Residues 272 to 281 (DRPDTNVPGD) are compositionally biased toward basic and acidic residues. Residues 320-329 (GETTVPQGTP) show a composition bias toward polar residues. Residues 354–363 (DRPDTNVPGD) are compositionally biased toward basic and acidic residues. The segment covering 402–411 (GETTVPQGTP) has biased composition (polar residues). Over residues 436-445 (DRPDTNVPGD) the composition is skewed to basic and acidic residues. The span at 484–493 (GETTVPQGTP) shows a compositional bias: polar residues. Residues 518 to 527 (DRPDTNVPGD) show a composition bias toward basic and acidic residues. The span at 566–575 (GETTVPQGTP) shows a compositional bias: polar residues. Positions 600 to 610 (DRPDTNVPGDH) are enriched in basic and acidic residues. Positions 648–657 (GETTVPQGTP) are enriched in polar residues. Over residues 682–692 (DRPDTNVPGDH) the composition is skewed to basic and acidic residues. The span at 730–739 (GETTVPQGTP) shows a compositional bias: polar residues. The span at 764 to 774 (DRPDTNVPGDH) shows a compositional bias: basic and acidic residues. Polar residues predominate over residues 812 to 821 (GETTVPQGTP). A compositionally biased stretch (basic and acidic residues) spans 846–856 (DRPDTNVPGDH). The span at 894–903 (GETTVPQGTP) shows a compositional bias: polar residues. The LPXTG sorting signal motif lies at 987–991 (LPATG). Position 990 is a pentaglycyl murein peptidoglycan amidated threonine (threonine 990). Residues 991–1020 (GENATPFFNVAALTIISSVGLLSVSKKKED) constitute a propeptide, removed by sortase.

The protein localises to the secreted. It is found in the cell wall. Its function is as follows. May play a role in both virulence and immunity. The polypeptide is C protein alpha-antigen (bca) (Streptococcus agalactiae serotype Ia (strain ATCC 27591 / A909 / CDC SS700)).